The following is a 653-amino-acid chain: uncharacterized protein (653 aa).

Transmembrane regions (helical) follow at residues 39-59 (AMTTLMVSLLMSSLPSGLKLI) and 207-227 (AVFVSIWLMVILGAAFNAFTI). Residues 225–277 (FTITKPIRELLTGVKNIASGDFHQRISLPFGGELGALIFNFNEMAERLEKYEQ) enclose the HAMP domain. Residues 286 to 356 (EKAKLETLVS…PALNDIVRKN (71 aa)) enclose the PAS domain. One can recognise a Histidine kinase domain in the interval 421–651 (NVSHELRTPL…CFFFDLIIAK (231 aa)). Phosphohistidine; by autocatalysis is present on H424.

It localises to the plastid. The protein resides in the chloroplast membrane. It carries out the reaction ATP + protein L-histidine = ADP + protein N-phospho-L-histidine.. This is an uncharacterized protein from Pyropia yezoensis (Susabi-nori).